A 109-amino-acid chain; its full sequence is U3-lycotoxin-Ls1x (109 aa).

Positions 1–20 are cleaved as a signal peptide; the sequence is MKFVLLFGVLLVTLFSYSSA. Positions 21–44 are excised as a propeptide; sequence EMLDDFDQADEDELLSLIEKEEAR. 4 cysteine pairs are disulfide-bonded: Cys48/Cys63, Cys55/Cys72, Cys62/Cys88, and Cys74/Cys86.

Belongs to the neurotoxin 19 (CSTX) family. 01 subfamily. In terms of tissue distribution, expressed by the venom gland.

The protein resides in the secreted. The sequence is that of U3-lycotoxin-Ls1x from Lycosa singoriensis (Wolf spider).